The primary structure comprises 157 residues: Cyclic pyranopterin monophosphate synthase (157 aa).

Substrate-binding positions include 74-76 and 112-113; these read MCH and ME. Aspartate 127 is a catalytic residue.

It belongs to the MoaC family. In terms of assembly, homohexamer; trimer of dimers.

It catalyses the reaction (8S)-3',8-cyclo-7,8-dihydroguanosine 5'-triphosphate = cyclic pyranopterin phosphate + diphosphate. It functions in the pathway cofactor biosynthesis; molybdopterin biosynthesis. Its function is as follows. Catalyzes the conversion of (8S)-3',8-cyclo-7,8-dihydroguanosine 5'-triphosphate to cyclic pyranopterin monophosphate (cPMP). This is Cyclic pyranopterin monophosphate synthase from Campylobacter jejuni subsp. jejuni serotype O:2 (strain ATCC 700819 / NCTC 11168).